A 20-amino-acid polypeptide reads, in one-letter code: 23 kDa cell wall protein (20 aa).

It localises to the secreted. Its subcellular location is the cell wall. This is 23 kDa cell wall protein from Arabidopsis thaliana (Mouse-ear cress).